We begin with the raw amino-acid sequence, 207 residues long: Guanylate kinase (207 aa).

In terms of domain architecture, Guanylate kinase-like spans 4-184 (GTLYIVSAPS…ALSDLKTIIR (181 aa)). 11-18 (APSGAGKS) is a binding site for ATP.

This sequence belongs to the guanylate kinase family.

It is found in the cytoplasm. It carries out the reaction GMP + ATP = GDP + ADP. The catalysed reaction is dZMP + ATP = dZDP + ADP. It functions in the pathway purine metabolism. Its function is as follows. Essential for recycling GMP and indirectly, cGMP. Functionally, (Microbial infection) Catalyzes the phosphorylation of dZMP to dZDP, when the bacterium is infected by a phage that produces the substrate for the synthesis of dZTP (2- amino-2'-deoxyadenosine 5'-triphosphate), which is then used by the phage as a DNA polymerase substrate. In Salmonella choleraesuis (strain SC-B67), this protein is Guanylate kinase.